The primary structure comprises 134 residues: D-ribose pyranase (134 aa).

Histidine 20 serves as the catalytic Proton donor. Substrate-binding positions include aspartate 28, histidine 99, and 123–125; that span reads FSN.

It belongs to the RbsD / FucU family. RbsD subfamily. In terms of assembly, homodecamer.

It is found in the cytoplasm. It carries out the reaction beta-D-ribopyranose = beta-D-ribofuranose. The protein operates within carbohydrate metabolism; D-ribose degradation; D-ribose 5-phosphate from beta-D-ribopyranose: step 1/2. Catalyzes the interconversion of beta-pyran and beta-furan forms of D-ribose. The protein is D-ribose pyranase of Staphylococcus epidermidis (strain ATCC 12228 / FDA PCI 1200).